A 217-amino-acid chain; its full sequence is Proteasome subunit beta type-9 (217 aa).

Positions 1–18 (MLGEEAEPQWISEEVKTG) are cleaved as a propeptide — removed in mature form. Catalysis depends on threonine 19, which acts as the Nucleophile.

Belongs to the peptidase T1B family. In terms of assembly, the 26S proteasome consists of a 20S proteasome core and two 19S regulatory subunits. The 20S proteasome core is composed of 28 subunits that are arranged in four stacked rings, resulting in a barrel-shaped structure. The two end rings are each formed by seven alpha subunits, and the two central rings are each formed by seven beta subunits. The catalytic chamber with the active sites is on the inside of the barrel. Component of the immunoproteasome, where it displaces the equivalent housekeeping subunit PSMB6. Autocleaved. The resulting N-terminal Thr residue of the mature subunit is responsible for the nucleophile proteolytic activity.

It is found in the cytoplasm. The protein resides in the nucleus. The catalysed reaction is Cleavage of peptide bonds with very broad specificity.. The proteasome is a multicatalytic proteinase complex which is characterized by its ability to cleave peptides with Arg, Phe, Tyr, Leu, and Glu adjacent to the leaving group at neutral or slightly basic pH. The proteasome has an ATP-dependent proteolytic activity. This subunit is involved in antigen processing to generate class I binding peptides. The polypeptide is Proteasome subunit beta type-9 (psmb9) (Oryzias latipes (Japanese rice fish)).